The sequence spans 315 residues: tRNA dimethylallyltransferase (315 aa).

Position 10–17 (10–17 (GPTEVGKT)) interacts with ATP. 12–17 (TEVGKT) provides a ligand contact to substrate. The interaction with substrate tRNA stretch occupies residues 35–38 (DSMQ).

It belongs to the IPP transferase family. In terms of assembly, monomer. The cofactor is Mg(2+).

It carries out the reaction adenosine(37) in tRNA + dimethylallyl diphosphate = N(6)-dimethylallyladenosine(37) in tRNA + diphosphate. In terms of biological role, catalyzes the transfer of a dimethylallyl group onto the adenine at position 37 in tRNAs that read codons beginning with uridine, leading to the formation of N6-(dimethylallyl)adenosine (i(6)A). This is tRNA dimethylallyltransferase from Geobacillus thermodenitrificans (strain NG80-2).